The following is a 2843-amino-acid chain: Adenomatous polyposis coli protein (2843 aa).

The residue at position 2 (Ala2) is an N-acetylalanine. Residues 2 to 61 (AAASYDQLLKQVEALKMENSNLRQELEDNSNHLTKLETEASNMKEVLKQLQGSIEDEAMA) adopt a coiled-coil conformation. A phosphoserine mark is found at Ser107 and Ser111. The stretch at 127-248 (SRESTGYLEE…ATEAERSSQN (122 aa)) forms a coiled coil. Residues 239-305 (ATEAERSSQN…STHSAPRRLT (67 aa)) form a disordered region. Residues 241-261 (EAERSSQNKHETGSHDAERQN) show a composition bias toward basic and acidic residues. The segment covering 271–282 (MATSGNGQGSTT) has biased composition (polar residues). Low complexity predominate over residues 290-299 (SVLSSSSTHS). ARM repeat units follow at residues 453–495 (LMKL…HYSI), 505–547 (LTNL…IASV), 548–591 (LRNL…VLSA), 592–638 (LWNL…GGGI), 639–683 (LRNV…ACGT), 684–725 (LWNL…SAAA), and 726–767 (LRNL…LDAQ). Ser744, Ser748, and Ser780 each carry phosphoserine. Residues 828-878 (TTVLPSSSSSRGSLDSSRSEKDRSLERERGIGLGNYHPATENPGTSSKRGL) form a disordered region. Low complexity predominate over residues 833–843 (SSSSSRGSLDS). The span at 844 to 857 (SRSEKDRSLERERG) shows a compositional bias: basic and acidic residues. Residues 869-878 (NPGTSSKRGL) are compositionally biased toward polar residues. Phosphoserine is present on Ser908. 2 disordered regions span residues 923–943 (RRSS…SENS) and 958–987 (RSSN…ESYS). Positions 927–943 (AAHTHSNTYNFTKSENS) are enriched in polar residues. The tract at residues 960–1337 (SNDSLNSVSS…QHPRTKSSRL (378 aa)) is responsible for down-regulation through a process mediated by direct ubiquitination. Positions 961 to 971 (NDSLNSVSSSD) are enriched in low complexity. Ser987, Ser1038, and Ser1042 each carry phosphoserine. Residues 1020-1169 (ELDTPINYSL…TNYSIKYNEE (150 aa)) form an interaction with catenins region. Disordered stretches follow at residues 1099 to 1169 (VSPY…YNEE), 1190 to 1244 (SQKQ…GQPQ), and 1311 to 1376 (IGTR…PEHY). Residues 1107–1130 (ANGSETNRVGSNHGINQNVSQSLC) show a composition bias toward polar residues. Residues 1146–1159 (RYSEEEQHEEEERP) show a composition bias toward basic and acidic residues. Low complexity predominate over residues 1190–1224 (SQKQSFSFSKSSSGQSSKTEHMSSSSENTSTPSSN). The span at 1225-1244 (AKRQNQLHPSSAQSRSGQPQ) shows a compositional bias: polar residues. Low complexity-rich tracts occupy residues 1335 to 1345 (SRLQGSSLSSE) and 1355 to 1366 (SSGAKSPSKSGA). Phosphoserine is present on residues Ser1360, Ser1371, Ser1385, Ser1392, and Ser1395. Disordered regions lie at residues 1403–1475 (SSVQ…VNAA), 1526–1569 (PPVQ…DSDD), 1583–1611 (MPTK…KPSQ), 1664–1717 (SPPN…DDNK), and 1729–1836 (NSAM…RVRG). Thr1438 carries the phosphothreonine modification. 2 stretches are compositionally biased toward basic and acidic residues: residues 1448–1466 (TKRE…RESG) and 1540–1564 (EQPK…KDLL). A Phosphoserine modification is found at Ser1567. The segment covering 1683–1698 (EFEKRDTIPTEGRSTD) has biased composition (basic and acidic residues). Positions 1735–1744 (GKSHKPFRVK) are enriched in basic residues. Ser1774 is modified (phosphoserine). 2 stretches are compositionally biased toward basic and acidic residues: residues 1785 to 1794 (YRTRVRKNAD) and 1804 to 1813 (VFSDNKDSKK). A phosphoserine mark is found at Ser1861, Ser1863, and Ser1864. The tract at residues 1866–1893 (DFDDDDVDLSREKAELRKAKENKESEAK) is highly charged. Residues 1881–1896 (LRKAKENKESEAKVTS) are compositionally biased toward basic and acidic residues. Disordered stretches follow at residues 1881–1950 (LRKA…TDEK), 1965–2011 (HNSS…APKS), and 2043–2072 (ISSA…GGIL). Polar residues-rich tracts occupy residues 1897–1913 (HTEL…TQAI) and 1928–1938 (QKQSTFPQSSK). Residues 1939–1950 (DIPDRGAATDEK) are compositionally biased toward basic and acidic residues. Ser1971 and Ser1973 each carry phosphoserine. Positions 1979 to 1991 (NNNKENEPIKETE) are enriched in basic and acidic residues. Residues 2035–2059 (EDDLLQECISSAMPKKKKPSRLKGD) form an interaction with AXIN1 region. Ser2088, Ser2093, Ser2125, Ser2129, Ser2130, and Ser2132 each carry phosphoserine. 2 disordered regions span residues 2147–2635 (PFHL…SGAT) and 2667–2714 (NNPR…VPMR). Residue Thr2151 is modified to Phosphothreonine. Residues 2167 to 2674 (ILKPGEKSTL…PINNPRSGRS (508 aa)) form a basic region region. Over residues 2169–2187 (KPGEKSTLETKKIESESKG) the composition is skewed to basic and acidic residues. 2 stretches are compositionally biased toward polar residues: residues 2203 to 2223 (VRSN…NMPS) and 2257 to 2271 (ASKS…TTSP). Ser2260, Ser2270, and Ser2283 each carry phosphoserine. The span at 2286–2331 (ARQTSQIGGSSKAPSRSGSRDSTPSRPAQQPLSRPIQSPGRNSISP) shows a compositional bias: polar residues. Positions 2348 to 2369 (TSSPSTASTKSSGSGKMSYTSP) are enriched in low complexity. Composition is skewed to polar residues over residues 2370–2409 (GRQM…NGNG) and 2418–2427 (RMSSTKSSGS). Over residues 2459 to 2477 (SASFESLSPSSRPASPTRS) the composition is skewed to low complexity. Phosphoserine is present on residues Ser2473 and Ser2535. Residues 2475-2843 (TRSQAQTPVL…HSGSYLVTSV (369 aa)) form an interaction with DLG1 region. A compositionally biased stretch (basic and acidic residues) spans 2518-2535 (NDGRPAKRHDIARSHSES). The segment covering 2555–2568 (SSSLPRVSTWRRTG) has biased composition (polar residues). Ser2569 carries the phosphoserine modification. The span at 2569-2579 (SSSSILSASSE) shows a compositional bias: low complexity. A compositionally biased stretch (basic and acidic residues) spans 2580–2592 (SSEKAKSEDEKHV). Composition is skewed to polar residues over residues 2593 to 2608 (NSIS…QVSA), 2620 to 2635 (FSPT…SGAT), and 2668 to 2679 (NPRSGRSPTGNT). Ser2671 and Ser2674 each carry phosphoserine. Residues 2674–2843 (SPTGNTPPVI…HSGSYLVTSV (170 aa)) form an interaction with MAPRE1 region. Thr2679 bears the Phosphothreonine mark. Ser2710 and Ser2724 each carry phosphoserine. The tract at residues 2729-2843 (DAPDQKGTEI…HSGSYLVTSV (115 aa)) is disordered. Positions 2741–2757 (GQNNPVPVSETNESSIV) are enriched in polar residues. A compositionally biased stretch (low complexity) spans 2763-2774 (SSSSSSKHSSPS). Positions 2784–2812 (FNYNPSPRKSSADSTSARPSQIPTPVNNN) are enriched in polar residues. Position 2789 is a phosphoserine (Ser2789). Residues 2803–2806 (SQIP) carry the Microtubule tip localization signal motif. A PDZ-binding motif is present at residues 2841 to 2843 (TSV).

It belongs to the adenomatous polyposis coli (APC) family. As to quaternary structure, forms homooligomers. Found in a complex consisting of ARHGEF4, APC and CTNNB1. Found in a complex composed of MACF1, APC, AXIN1, CTNNB1 and GSK3B. The complex composed, at least, of APC, CTNNB1 and GSK3B interacts with JPT1; the interaction requires the inactive form of GSK3B (phosphorylated at 'Ser-9'). Interacts with APC2. Interacts with DLG1 (via PDZ domains) and DLG3 (via PDZ domains). Interacts with alpha- and beta-catenins. Interacts with AXIN1 (via RGS domain). Interacts with ARHGEF4 (via N-terminus). Interacts (via C-terminal residues 2674-2843) with MAPRE1 (via C-terminal residues 206-211); the interaction inhibits association with and bundling of F-actin. Interacts with MAPRE2 and MAPRE3 (via C-terminus). Interacts with DIAPH1; DIAPH1 acts as a scaffold protein for MAPRE1 and APC to stabilize microtubules and promote cell migration. Interacts with DIAPH2. Interacts with SCRIB; may mediate APC targeting to adherens junctions of epithelial cells. Interacts with SPATA13 (via N-terminus and SH3 domain). Interacts with ASAP1 (via SH3 domain). Interacts (at the cell membrane) with AMER1 and AMER2 (via ARM repeats). Interacts with KHDRBS1. Interacts with actin; binds both to F-actin and actin filament bundles. Post-translationally, phosphorylated; phosphorylation enhances the F-actin bundling activity. Phosphorylated by GSK3B. Ubiquitinated, leading to its degradation by the proteasome. Ubiquitination is facilitated by Axin. Deubiquitinated by ZRANB1/TRABID. In terms of tissue distribution, expressed in a variety of tissues: brain, small intestine, colon, thymus, skeletal muscle, heart, prostate, lung, spleen, ovary, testis kidney, placenta, blood and liver. Isoform 1A: Very strongly expressed in brain but has relatively low expression levels in other tissues. Isoform 1B: Predominant form in all tissues except for brain, including gastric mucosa and blood.

The protein resides in the cell junction. The protein localises to the adherens junction. It is found in the cytoplasm. It localises to the cytoskeleton. Its subcellular location is the cell projection. The protein resides in the lamellipodium. The protein localises to the ruffle membrane. It is found in the cell membrane. Tumor suppressor. Promotes rapid degradation of CTNNB1 and participates in Wnt signaling as a negative regulator. APC activity is correlated with its phosphorylation state. Activates the GEF activity of SPATA13 and ARHGEF4. Plays a role in hepatocyte growth factor (HGF)-induced cell migration. Required for MMP9 up-regulation via the JNK signaling pathway in colorectal tumor cells. Associates with both microtubules and actin filaments, components of the cytoskeleton. Plays a role in mediating the organization of F-actin into ordered bundles. Functions downstream of Rho GTPases and DIAPH1 to selectively stabilize microtubules. Acts as a mediator of ERBB2-dependent stabilization of microtubules at the cell cortex. It is required for the localization of MACF1 to the cell membrane and this localization of MACF1 is critical for its function in microtubule stabilization. The sequence is that of Adenomatous polyposis coli protein from Homo sapiens (Human).